The sequence spans 468 residues: ATP synthase subunit beta (468 aa).

An ATP-binding site is contributed by 155–162 (GGAGVGKT).

This sequence belongs to the ATPase alpha/beta chains family. F-type ATPases have 2 components, CF(1) - the catalytic core - and CF(0) - the membrane proton channel. CF(1) has five subunits: alpha(3), beta(3), gamma(1), delta(1), epsilon(1). CF(0) has three main subunits: a(1), b(2) and c(9-12). The alpha and beta chains form an alternating ring which encloses part of the gamma chain. CF(1) is attached to CF(0) by a central stalk formed by the gamma and epsilon chains, while a peripheral stalk is formed by the delta and b chains.

Its subcellular location is the cell inner membrane. It catalyses the reaction ATP + H2O + 4 H(+)(in) = ADP + phosphate + 5 H(+)(out). Functionally, produces ATP from ADP in the presence of a proton gradient across the membrane. The catalytic sites are hosted primarily by the beta subunits. This chain is ATP synthase subunit beta, found in Thermotoga petrophila (strain ATCC BAA-488 / DSM 13995 / JCM 10881 / RKU-1).